Consider the following 146-residue polypeptide: Anti-sigma F factor (146 aa).

It belongs to the anti-sigma-factor family.

It catalyses the reaction L-seryl-[protein] + ATP = O-phospho-L-seryl-[protein] + ADP + H(+). The enzyme catalyses L-threonyl-[protein] + ATP = O-phospho-L-threonyl-[protein] + ADP + H(+). Its function is as follows. Binds to sigma F and blocks its ability to form an RNA polymerase holoenzyme (E-sigma F). Phosphorylates SpoIIAA on a serine residue. This phosphorylation may enable SpoIIAA to act as an anti-anti-sigma factor that counteracts SpoIIAB and thus releases sigma F from inhibition. This chain is Anti-sigma F factor (spoIIAB), found in Bacillus subtilis (strain 168).